The following is a 1024-amino-acid chain: Zn(2)-C6 fungal-type transcription factor FTF1a (1024 aa).

Residues cysteine 137–cysteine 164 constitute a DNA-binding region (zn(2)-C6 fungal-type).

It is found in the nucleus. In terms of biological role, zn(2)-C6 fungal-type transcription factor that has a role in the establishment of the fungus within the plant and/or the progress of the disease. Regulates the expression of virulence factors such as SIX1 and SIX6. This chain is Zn(2)-C6 fungal-type transcription factor FTF1a, found in Fusarium oxysporum f. sp. lycopersici (strain 4287 / CBS 123668 / FGSC 9935 / NRRL 34936) (Fusarium vascular wilt of tomato).